A 282-amino-acid chain; its full sequence is Aquaporin-6 (282 aa).

At 1–25 the chain is on the cytoplasmic side; the sequence is MDAVEPGGRGWASMLACRLWKAISR. The helical transmembrane segment at 26–46 threads the bilayer; the sequence is ALFAEFLATGLYVFFGVGSVM. The Extracellular segment spans residues 47–54; that stretch reads RWPTALPS. The chain crosses the membrane as a helical span at residues 55–73; the sequence is VLQIAITFNLVTAMAVQVT. The Cytoplasmic segment spans residues 74 to 78; it reads WKASG. The segment at residues 79–88 is an intramembrane region (discontinuously helical); sequence AHANPAVTLA. The NPA 1 motif lies at 82-84; that stretch reads NPA. The Cytoplasmic segment spans residues 89-99; it reads FLVGSHISLPR. Residues 100 to 121 form a helical membrane-spanning segment; it reads AVAYVAAQLVGATVGAALLYGV. At 122–141 the chain is on the extracellular side; that stretch reads MPGDIRETLGINVVRNSVST. A helical membrane pass occupies residues 142–162; sequence GQAVAVELLLTLQLVLCVFAS. Residues 163–168 are Cytoplasmic-facing; it reads TDSRQT. The chain crosses the membrane as a helical span at residues 169–188; it reads SGSPATMIGISVALGHLIGI. Topologically, residues 189–192 are extracellular; the sequence is HFTG. The segment at residues 193 to 205 is an intramembrane region (discontinuously helical); that stretch reads CSMNPARSFGPAI. The NPA 2 motif lies at 196–198; the sequence is NPA. The Extracellular portion of the chain corresponds to 206–213; that stretch reads IIGKFTVH. The helical transmembrane segment at 214–234 threads the bilayer; sequence WVFWVGPLMGALLASLIYNFV. Topologically, residues 235 to 282 are cytoplasmic; it reads LFPDTKTLAQRLAILTGTVEVGTGAGAGAEPLKKESQPGSGAVEMESV. The disordered stretch occupies residues 260–282; the sequence is GAGAEPLKKESQPGSGAVEMESV.

The protein belongs to the MIP/aquaporin (TC 1.A.8) family. In terms of assembly, homotetramer; each monomer provides an independent solute pore.

Its subcellular location is the cytoplasmic vesicle membrane. It catalyses the reaction nitrate(in) = nitrate(out). The enzyme catalyses iodide(out) = iodide(in). It carries out the reaction bromide(in) = bromide(out). The catalysed reaction is chloride(in) = chloride(out). It catalyses the reaction Na(+)(in) = Na(+)(out). The enzyme catalyses H2O(in) = H2O(out). It carries out the reaction CO2(out) = CO2(in). The catalysed reaction is NH4(+)(in) = NH4(+)(out). Its function is as follows. Aquaporins form homotetrameric transmembrane channels, with each monomer independently mediating water transport across the plasma membrane along its osmotic gradient. Unlike classical aquaporins, AQP6 is an intracellular channel with selective anion permeability, particularly for nitrate, and exhibits very low water permeability. It may also facilitate the transport of gases, such as CO2 and NH4(+), as demonstrated in vitro. The sequence is that of Aquaporin-6 from Homo sapiens (Human).